The chain runs to 258 residues: Lyso-ornithine lipid O-acyltransferase (258 aa).

The chain crosses the membrane as a helical span at residues 7-29 (LLRSARLLGLVALGLGLAAWVSL).

The protein belongs to the 1-acyl-sn-glycerol-3-phosphate acyltransferase family. OlsA subfamily.

The protein localises to the membrane. It catalyses the reaction a lyso-ornithine lipid + a fatty acyl-[ACP] = an N(2)-[(3R)-3-(acyloxy)acyl]-L-ornithine lipid + holo-[ACP]. Its pathway is lipid metabolism. Its function is as follows. Catalyzes the second step in the formation of ornithine lipids, which are phosphorus-free membrane lipids. Uses acyl-acyl carrier protein (acyl-AcpP) as an acyl donor and converts lyso-ornithine lipid (LOL) into ornithine lipid (OL). The chain is Lyso-ornithine lipid O-acyltransferase from Pseudomonas aeruginosa (strain ATCC 15692 / DSM 22644 / CIP 104116 / JCM 14847 / LMG 12228 / 1C / PRS 101 / PAO1).